The primary structure comprises 347 residues: NADH-ubiquinone oxidoreductase chain 2 (347 aa).

Transmembrane regions (helical) follow at residues 3–23 (PPIFIIIMSTVISGTVIVMTS), 25–45 (HWMLTWIGFEMNMLAIIPILM), 59–79 (YFLTQATASMLLMMGIIINLL), 96–116 (ILMTTALAMKLGLAPFHFWVP), 122–142 (ISLSSGMILLTWQKIAPLSIL), 149–169 (INPHLLLPMAILSVLIGGWGG), 178–198 (IMAYSSIAHMGWMAAILLYNP), 201–221 (MFLNLIIYITMTLTTFMLFML), 237–257 (APLITSLILTLMLSLGGLPPL), 274–294 (EMIILPTFLAITALLNLYFYM), and 323–343 (TIFLPPLIIISTMMLPLTPMI).

This sequence belongs to the complex I subunit 2 family. As to quaternary structure, core subunit of respiratory chain NADH dehydrogenase (Complex I) which is composed of 45 different subunits. Interacts with TMEM242.

The protein localises to the mitochondrion inner membrane. It catalyses the reaction a ubiquinone + NADH + 5 H(+)(in) = a ubiquinol + NAD(+) + 4 H(+)(out). Its function is as follows. Core subunit of the mitochondrial membrane respiratory chain NADH dehydrogenase (Complex I) which catalyzes electron transfer from NADH through the respiratory chain, using ubiquinone as an electron acceptor. Essential for the catalytic activity and assembly of complex I. In Viverra tangalunga (Malayan civet), this protein is NADH-ubiquinone oxidoreductase chain 2.